A 314-amino-acid polypeptide reads, in one-letter code: Nodulation protein D 1 (314 aa).

One can recognise an HTH lysR-type domain in the interval 6–63 (LDLNLLVALDALMTERNLTAAARSINLSQPAMSAAVGRLRTYFNDDLFTMVGRELVPT). A DNA-binding region (H-T-H motif) is located at residues 23-42 (LTAAARSINLSQPAMSAAVG).

The protein belongs to the LysR transcriptional regulatory family.

NodD regulates the expression of the nodABCFE genes which encode other nodulation proteins. NodD is also a negative regulator of its own expression. Binds flavonoids as inducers. This Rhizobium leguminosarum bv. phaseoli protein is Nodulation protein D 1 (nodD1).